We begin with the raw amino-acid sequence, 369 residues long: UPF0324 membrane protein DVU_0543 (369 aa).

Helical transmembrane passes span 13–31 (IVPG…RTYV), 46–65 (WLVQ…TGMF), 110–132 (GGVA…MWLG), 142–164 (TATM…APGV), 171–193 (LALS…PFIG), 240–262 (WNVV…YWKG), 269–291 (TSLG…GMTA), 306–328 (LHLM…GAYI), and 341–363 (LRIG…LAFI).

It belongs to the UPF0324 family.

The protein resides in the cell membrane. This Nitratidesulfovibrio vulgaris (strain ATCC 29579 / DSM 644 / CCUG 34227 / NCIMB 8303 / VKM B-1760 / Hildenborough) (Desulfovibrio vulgaris) protein is UPF0324 membrane protein DVU_0543.